The primary structure comprises 34 residues: Kappa-theraphotoxin-Scg1a (34 aa).

Intrachain disulfides connect Cys2-Cys16, Cys9-Cys21, and Cys15-Cys28. Residues 4 to 6 (YLF) are involved in active face.

This sequence belongs to the neurotoxin 10 (Hwtx-1) family. 09 (HaTx) subfamily. In terms of tissue distribution, expressed by the venom gland.

It localises to the secreted. In terms of biological role, reversibly inhibits potassium currents in oocytes expressing Kv2.1/KCNB1 channels (Kd=2.7 uM). Acts by shifting activation of the channel to more depolarized voltages. The toxin may bind to the S3b-S4 helices of the voltage sensor paddle. One, two, three or four toxin molecules may bind the Kv2.1/KCNB1 channel. It shows low to moderate affinity for lipid bilayers. It partitions into the bilayer membrane, where it stabilizes at the water/membrane interface. The sequence is that of Kappa-theraphotoxin-Scg1a from Stromatopelma calceatum griseipes (Feather leg baboon tarantula).